A 279-amino-acid chain; its full sequence is Putative pyruvate, phosphate dikinase regulatory protein (279 aa).

153 to 160 (GVSRTSKT) is a binding site for ADP.

It belongs to the pyruvate, phosphate/water dikinase regulatory protein family. PDRP subfamily.

The catalysed reaction is N(tele)-phospho-L-histidyl/L-threonyl-[pyruvate, phosphate dikinase] + ADP = N(tele)-phospho-L-histidyl/O-phospho-L-threonyl-[pyruvate, phosphate dikinase] + AMP + H(+). The enzyme catalyses N(tele)-phospho-L-histidyl/O-phospho-L-threonyl-[pyruvate, phosphate dikinase] + phosphate + H(+) = N(tele)-phospho-L-histidyl/L-threonyl-[pyruvate, phosphate dikinase] + diphosphate. In terms of biological role, bifunctional serine/threonine kinase and phosphorylase involved in the regulation of the pyruvate, phosphate dikinase (PPDK) by catalyzing its phosphorylation/dephosphorylation. The sequence is that of Putative pyruvate, phosphate dikinase regulatory protein from Rhodopseudomonas palustris (strain BisB5).